We begin with the raw amino-acid sequence, 89 residues long: cAMP-regulated phosphoprotein 21 (89 aa).

Residues 1–89 are disordered; sequence MSEQGDLNQA…GGESLQDQTL (89 aa). S2 is subject to N-acetylserine. Positions 9–25 are enriched in low complexity; the sequence is QAIAEEGGTEQETATPE. S33 carries the phosphoserine modification. Positions 40 to 53 are enriched in basic and acidic residues; sequence LELQRRLEAQNQER. The residue at position 56 (S56) is a Phosphoserine.

As to quaternary structure, interacts with CALM1. Phosphorylation at Ser-56 favors interaction with CALM1.

The protein localises to the cytoplasm. Functionally, may act as a competitive inhibitor of calmodulin-dependent enzymes such as calcineurin in neurons. In Pongo abelii (Sumatran orangutan), this protein is cAMP-regulated phosphoprotein 21 (ARPP21).